The chain runs to 237 residues: tRNA (guanine-N(7)-)-methyltransferase (237 aa).

4 residues coordinate S-adenosyl-L-methionine: Glu-67, Glu-92, Asp-119, and Asp-142. The active site involves Asp-142. Substrate-binding positions include Lys-146, Asp-178, and Thr-215 to Glu-218.

It belongs to the class I-like SAM-binding methyltransferase superfamily. TrmB family.

It carries out the reaction guanosine(46) in tRNA + S-adenosyl-L-methionine = N(7)-methylguanosine(46) in tRNA + S-adenosyl-L-homocysteine. It participates in tRNA modification; N(7)-methylguanine-tRNA biosynthesis. In terms of biological role, catalyzes the formation of N(7)-methylguanine at position 46 (m7G46) in tRNA. This Aeromonas hydrophila subsp. hydrophila (strain ATCC 7966 / DSM 30187 / BCRC 13018 / CCUG 14551 / JCM 1027 / KCTC 2358 / NCIMB 9240 / NCTC 8049) protein is tRNA (guanine-N(7)-)-methyltransferase.